The primary structure comprises 49 residues: Splenin (49 aa).

Residues leucine 4–leucine 47 enclose the LEM-like domain. The tract at residues arginine 32–tyrosine 36 is essential for biological activity.

It belongs to the thymopoietin family.

Its function is as follows. Hormone of the spleen with pleiotropic actions on prothymocytes, mature T-cells, the nicotinic acetylcholine receptor, and pituitary corticotrophs. The polypeptide is Splenin (SP) (Bos taurus (Bovine)).